Reading from the N-terminus, the 101-residue chain is Large ribosomal subunit protein uL24 (101 aa).

This sequence belongs to the universal ribosomal protein uL24 family. In terms of assembly, part of the 50S ribosomal subunit.

Functionally, one of two assembly initiator proteins, it binds directly to the 5'-end of the 23S rRNA, where it nucleates assembly of the 50S subunit. One of the proteins that surrounds the polypeptide exit tunnel on the outside of the subunit. The polypeptide is Large ribosomal subunit protein uL24 (Paracoccus denitrificans (strain Pd 1222)).